Here is a 153-residue protein sequence, read N- to C-terminus: Ribonuclease H (153 aa).

The RNase H type-1 domain maps to 7–148 (PADLVEMWTD…ADMLANQGVA (142 aa)). 4 residues coordinate Mg(2+): Asp16, Glu54, Asp76, and Asp140.

This sequence belongs to the RNase H family. As to quaternary structure, monomer. It depends on Mg(2+) as a cofactor.

The protein localises to the cytoplasm. It carries out the reaction Endonucleolytic cleavage to 5'-phosphomonoester.. Functionally, endonuclease that specifically degrades the RNA of RNA-DNA hybrids. In Bordetella avium (strain 197N), this protein is Ribonuclease H.